The chain runs to 174 residues: Transcription antitermination protein NusB (174 aa).

Residues 1 to 11 show a composition bias toward polar residues; it reads MSEVETTNDQT. Positions 1–29 are disordered; sequence MSEVETTNDQTPAPKRKDKKPSRSQLRSA.

It belongs to the NusB family.

Involved in transcription antitermination. Required for transcription of ribosomal RNA (rRNA) genes. Binds specifically to the boxA antiterminator sequence of the ribosomal RNA (rrn) operons. The chain is Transcription antitermination protein NusB from Marinomonas sp. (strain MWYL1).